A 2699-amino-acid chain; its full sequence is UPF0648 protein C3H5.09c (2699 aa).

Asn21 carries N-linked (GlcNAc...) asparagine glycosylation. A helical transmembrane segment spans residues 24–44 (FVWVVIATGFLFHLVLFVLSY). N-linked (GlcNAc...) asparagine glycosylation is found at Asn288, Asn293, Asn334, Asn345, Asn433, Asn507, Asn551, Asn655, Asn760, Asn993, Asn1000, Asn1003, Asn1006, and Asn1009. A disordered region spans residues 975–1021 (KAKDPSPKSASESSSFYQNGSDIDDNDSNSSNTSNHTTENANAQQRK). The segment covering 981 to 995 (PKSASESSSFYQNGS) has biased composition (low complexity). Residues 1006 to 1033 (NTSNHTTENANAQQRKLEDLNRSFEDFL) adopt a coiled-coil conformation. Residues 1010 to 1019 (HTTENANAQQ) are compositionally biased toward polar residues. N-linked (GlcNAc...) asparagine glycans are attached at residues Asn1026, Asn1039, Asn1046, Asn1236, Asn1255, Asn1344, Asn1527, Asn1595, Asn1791, Asn1916, Asn2032, Asn2048, Asn2256, Asn2285, Asn2388, Asn2407, Asn2417, Asn2508, and Asn2622. Positions 1758–1818 (QYELLQKRRK…TLSDHYRLLE (61 aa)) form a coiled coil. A disordered region spans residues 2393–2447 (FPHIYSRNHDKRKENGSQGEADNSNYSGSLMRRRTNDQEEDALATPSSSRRDSRS). The span at 2408 to 2420 (GSQGEADNSNYSG) shows a compositional bias: polar residues. Disordered regions lie at residues 2606–2632 (AEEN…LNSP) and 2647–2676 (ADIV…ARVD). Polar residues predominate over residues 2617-2632 (SAISRNHSTRSSLNSP).

The protein belongs to the UPF0648 family.

The protein resides in the membrane. This is UPF0648 protein C3H5.09c from Schizosaccharomyces pombe (strain 972 / ATCC 24843) (Fission yeast).